The following is a 331-amino-acid chain: N-arachidonyl glycine receptor (331 aa).

At 1 to 26 the chain is on the extracellular side; the sequence is MITLNNQDQPVPFNNSYPDEYEIAAL. N-linked (GlcNAc...) asparagine glycosylation occurs at Asn14. The chain crosses the membrane as a helical span at residues 27-47; sequence VFYSCIFIIGLFVNITALWVF. Residues 48–56 lie on the Cytoplasmic side of the membrane; it reads SCTTKKRTT. The helical transmembrane segment at 57 to 77 threads the bilayer; the sequence is VTIYMMNVALVDLIFIMTLPF. Residues 78 to 95 lie on the Extracellular side of the membrane; sequence RMFYYAKDEWPFGEYFCQ. Residues Cys94 and Cys172 are joined by a disulfide bond. Residues 96-116 traverse the membrane as a helical segment; it reads ILGALTVFYPSIALWLLAFIS. The Cytoplasmic portion of the chain corresponds to 117 to 138; that stretch reads ADRYMAIVQPKYAKELKNTCKA. The chain crosses the membrane as a helical span at residues 139–159; the sequence is VLACVGVWIMTLTTTIPLLLL. The Extracellular segment spans residues 160 to 191; it reads HKDPDKDSTPATCLKISDIVYLKAVNVLNFTR. A glycan (N-linked (GlcNAc...) asparagine) is linked at Asn188. A helical transmembrane segment spans residues 192-212; sequence LTFFFLIPLFIMIGCYLVIIH. Residues 213-232 are Cytoplasmic-facing; it reads NLLHGRTSKLKPKVKEKSIR. Residues 233–253 form a helical membrane-spanning segment; the sequence is IIITLLVQVLVCFMPFHICFA. Residues 254-268 lie on the Extracellular side of the membrane; that stretch reads FLMLGTGENSYSPWG. The helical transmembrane segment at 269–289 threads the bilayer; it reads AFTTFLMNLSTCLDVILYYIV. The Cytoplasmic segment spans residues 290–331; it reads SKQFQARVISVMLYRNYLRGMRRKSFRSGSLRSLSNINSEML. Position 322 is a phosphoserine (Ser322).

Belongs to the G-protein coupled receptor 1 family.

It is found in the cell membrane. The protein localises to the cytoplasmic vesicle membrane. G protein-coupled receptor (GPCR) that plays a role in diverse physiological processes particularly within the immune and nervous systems. Becomes active when triggered by various endogenous ligands including endocannabinoid N-arachidonyl glycine (NAGly), delta-9-tetrahydrocannabinol or resolvin D2/RvD2 derived from the omega-3 fatty acid docosahexaenoic acid (DHA). Upon RvD2 binding, facilitates the resolution of inflammation, aiding in tissue repair and homeostasis. Mechanistically, RvD2 ligation initiates Galphas protein coupling, activation of cAMP-PKA signaling pathway and phosphorylation of STAT3, leading to RvD2-stimulated macrophage phagocytosis. Mediates NAGly-induced process of reorganization of actin filaments and induction of acrosomal exocytosis. Activation by N-arachidonoyl glycine (NAGly) can also induce apoptosis in macrophages. Plays a role in homeostasis of CD8+ subsets of intraepithelial lymphocytes (IELs) (CD8alphaalpha and CD8alphabeta IELs) in small intestine by supporting preferential migration of CD8alphaalpha T-cells to intraepithelial compartment over lamina propria compartment, and by mediating their reconstitution into small intestine after bone marrow transplant. Participates also in hypotensive responses, mediating reduction in intraocular and blood pressure. This Macaca fascicularis (Crab-eating macaque) protein is N-arachidonyl glycine receptor.